Here is a 430-residue protein sequence, read N- to C-terminus: Na(+)/H(+) antiporter NhaA 2 (430 aa).

Transmembrane regions (helical) follow at residues 11–31 (FVHG…IAFI), 60–80 (LSLE…LVGL), 97–117 (VALA…LYTA), 127–147 (GWGV…ALLG), 181–201 (LNLT…YAGW), 215–235 (VLLW…GVLL), 288–308 (HALH…TNAG), 309–329 (VPVA…GLLL), 356–376 (WGHM…SLFV), and 393–413 (GVLL…LLGI).

The protein belongs to the NhaA Na(+)/H(+) (TC 2.A.33) antiporter family.

It is found in the cell membrane. The enzyme catalyses Na(+)(in) + 2 H(+)(out) = Na(+)(out) + 2 H(+)(in). Na(+)/H(+) antiporter that extrudes sodium in exchange for external protons. The polypeptide is Na(+)/H(+) antiporter NhaA 2 (Deinococcus geothermalis (strain DSM 11300 / CIP 105573 / AG-3a)).